A 635-amino-acid polypeptide reads, in one-letter code: DNA-directed RNA polymerase subunit gamma (635 aa).

4 residues coordinate Zn(2+): Cys-74, Cys-76, Cys-89, and Cys-92. Positions 471, 473, and 475 each coordinate Mg(2+).

It belongs to the RNA polymerase beta' chain family. RpoC1 subfamily. In cyanobacteria the RNAP catalytic core is composed of 2 alpha, 1 beta, 1 beta', 1 gamma and 1 omega subunit. When a sigma factor is associated with the core the holoenzyme is formed, which can initiate transcription. The cofactor is Mg(2+). Zn(2+) is required as a cofactor.

It catalyses the reaction RNA(n) + a ribonucleoside 5'-triphosphate = RNA(n+1) + diphosphate. Functionally, DNA-dependent RNA polymerase catalyzes the transcription of DNA into RNA using the four ribonucleoside triphosphates as substrates. This is DNA-directed RNA polymerase subunit gamma from Prochlorococcus marinus (strain NATL2A).